A 691-amino-acid polypeptide reads, in one-letter code: Homeobox protein NOBOX (691 aa).

The span at 94 to 103 shows a compositional bias: basic and acidic residues; the sequence is ELTRGQKAGE. The disordered stretch occupies residues 94-233; it reads ELTRGQKAGE…NSARATHNPV (140 aa). Polar residues predominate over residues 216 to 228; sequence PTSSPGAPNSARA. The segment at residues 272-363 is a DNA-binding region (homeobox); sequence RKKTRTLYRS…NRRAKWRKME (92 aa). 3 disordered regions span residues 366–385, 394–437, and 635–691; these read NGKE…SQCS, VPME…AQRV, and QALG…SHVP. Pro residues predominate over residues 395-405; that stretch reads PMEPKPDPFPQ. A compositionally biased stretch (polar residues) spans 420–432; that stretch reads TSDQTLAPTQPSE. Basic and acidic residues predominate over residues 679-691; it reads EEARGDDKNSHVP.

In terms of tissue distribution, expressed in ovaries, testes and pancreas. Expressed within all stages of the adult female germline, from primordial follicles through to MII oocytes.

It localises to the nucleus. Transcription factor which may play a role in oogenesis. Binds preferentially to the DNA sequences 5'-TAATTG-3', 5'-TAGTTG-3' and 5'-TAATTA-3'. This chain is Homeobox protein NOBOX (NOBOX), found in Homo sapiens (Human).